A 343-amino-acid polypeptide reads, in one-letter code: L-lysine cyclodeaminase (343 aa).

The protein belongs to the ornithine cyclodeaminase/mu-crystallin family. NAD(+) serves as cofactor.

The catalysed reaction is L-lysine = L-pipecolate + NH4(+). It functions in the pathway antibiotic biosynthesis. Inhibited by nipecotic acid and thiazolidine-2-carboxylic acid. Its function is as follows. Converts L-lysine to L-pipecolate, which is incorporated into multiple secondary metabolite products, including rapamycin, tobulysin, virginiamycin and pristinamycin. This Streptomyces rapamycinicus (strain ATCC 29253 / DSM 41530 / NRRL 5491 / AYB-994) (Streptomyces hygroscopicus (strain ATCC 29253)) protein is L-lysine cyclodeaminase (rapL).